Here is a 649-residue protein sequence, read N- to C-terminus: MHLSEITHPNQLRNLSLSQLRSLARQIREKHLQTAANSPVGCHLGPGLGVVELTLALYKTLDLDRDKVIWDVGHQAYAHKMLTGRYHNFHTIRQKGGISGYLKRSESRFDHFGAGHASTSISAALGMAIARDRRGENFKVVAIIGDGALTGGMAYEAINHAGHLPKTNLMVILNDNGMSISPNVGAIPRYLNRLRLSPPVQFLADSLEEQLKNLPLVGSSLSPEIDRLKETVKLVTAVQNNKAGIIFEELGFTYVGPVDGHNLAELLDAFELAHGISGPVLVHVATVKGKGYPPAEAEQVSYHAQSRFDLATGKPYPPTKPTPPSYSKVFGHTLCKLAERDPRIIGITAAMDTGTGLDKLKEKLPDQFVDVGIAEQHAVTLAAGMACEGMRPVVAIYSTFLQRAYDQIIHDVCIQKLPVFFCLDRAGVVGADGPTHQGMYDIAYLRCIPEMVLMAPKDEAELQRMVVTGIQYTKGPIAMRYPRGAGVGVPLAEEGWEPIPIGKAEVLRSGGEVLILAYGSMVHPSLQAAEILKEHGISTTVVNARFAKPLDTELILPLAQQSRLVVTVEEGCLMGGFGSAVGEALLDADIRVPLLRLGVPDVWVEHATPEESLAELGLNSVGIAERIRAKVEALQGQRASQAQAILGSS.

Thiamine diphosphate-binding positions include H74 and 115–117 (GHA). Residue D146 participates in Mg(2+) binding. Thiamine diphosphate contacts are provided by residues 147–148 (GA), N176, Y292, and E375. N176 lines the Mg(2+) pocket.

It belongs to the transketolase family. DXPS subfamily. In terms of assembly, homodimer. The cofactor is Mg(2+). It depends on thiamine diphosphate as a cofactor.

It catalyses the reaction D-glyceraldehyde 3-phosphate + pyruvate + H(+) = 1-deoxy-D-xylulose 5-phosphate + CO2. It participates in metabolic intermediate biosynthesis; 1-deoxy-D-xylulose 5-phosphate biosynthesis; 1-deoxy-D-xylulose 5-phosphate from D-glyceraldehyde 3-phosphate and pyruvate: step 1/1. In terms of biological role, catalyzes the acyloin condensation reaction between C atoms 2 and 3 of pyruvate and glyceraldehyde 3-phosphate to yield 1-deoxy-D-xylulose-5-phosphate (DXP). The protein is 1-deoxy-D-xylulose-5-phosphate synthase of Synechococcus sp. (strain JA-3-3Ab) (Cyanobacteria bacterium Yellowstone A-Prime).